The sequence spans 398 residues: 1-deoxy-D-xylulose 5-phosphate reductoisomerase (398 aa).

NADPH-binding residues include Thr10, Gly11, Ser12, Ile13, Gly36, Lys37, Asn38, and Asn124. Lys125 is a binding site for 1-deoxy-D-xylulose 5-phosphate. Glu126 lines the NADPH pocket. Asp150 serves as a coordination point for Mn(2+). Positions 151, 152, 186, and 209 each coordinate 1-deoxy-D-xylulose 5-phosphate. A Mn(2+)-binding site is contributed by Glu152. Gly215 is an NADPH binding site. Ser222, Asn227, Lys228, and Glu231 together coordinate 1-deoxy-D-xylulose 5-phosphate. A Mn(2+)-binding site is contributed by Glu231.

This sequence belongs to the DXR family. As to quaternary structure, homodimer. The cofactor is Mg(2+). Mn(2+) serves as cofactor.

The enzyme catalyses 2-C-methyl-D-erythritol 4-phosphate + NADP(+) = 1-deoxy-D-xylulose 5-phosphate + NADPH + H(+). It functions in the pathway isoprenoid biosynthesis; isopentenyl diphosphate biosynthesis via DXP pathway; isopentenyl diphosphate from 1-deoxy-D-xylulose 5-phosphate: step 1/6. Its function is as follows. Catalyzes the NADPH-dependent rearrangement and reduction of 1-deoxy-D-xylulose-5-phosphate (DXP) to 2-C-methyl-D-erythritol 4-phosphate (MEP). In Shigella flexneri, this protein is 1-deoxy-D-xylulose 5-phosphate reductoisomerase.